We begin with the raw amino-acid sequence, 62 residues long: UPF0291 protein CLB_2550 (62 aa).

This sequence belongs to the UPF0291 family.

The protein resides in the cytoplasm. This Clostridium botulinum (strain ATCC 19397 / Type A) protein is UPF0291 protein CLB_2550.